The sequence spans 200 residues: Blue fluorescence protein (200 aa).

Lumazine-binding repeat units follow at residues 1 to 111 and 112 to 200; these read MFKG…TGGR and SLSG…AGNW.

In terms of assembly, monomer.

Its subcellular location is the cytoplasm. Functionally, blue fluorescence protein (BFP) that can bind 6,7-dimethyl-8-ribityllumazine, riboflavin, and 6-methyl-7-oxo-8-ribityllumazine as a bound fluorophore. Has no riboflavin-synthase activity. This Aliivibrio fischeri (Vibrio fischeri) protein is Blue fluorescence protein.